A 321-amino-acid polypeptide reads, in one-letter code: Ribosomal RNA small subunit methyltransferase H (321 aa).

S-adenosyl-L-methionine is bound by residues G40–H42, D60, F84, D106, and Q113.

The protein belongs to the methyltransferase superfamily. RsmH family.

It localises to the cytoplasm. The catalysed reaction is cytidine(1402) in 16S rRNA + S-adenosyl-L-methionine = N(4)-methylcytidine(1402) in 16S rRNA + S-adenosyl-L-homocysteine + H(+). Specifically methylates the N4 position of cytidine in position 1402 (C1402) of 16S rRNA. This Pasteurella multocida (strain Pm70) protein is Ribosomal RNA small subunit methyltransferase H.